The following is a 309-amino-acid chain: Glutaminase (309 aa).

Positions 65, 117, 162, 169, 193, 245, and 263 each coordinate substrate.

This sequence belongs to the glutaminase family. As to quaternary structure, homotetramer.

The enzyme catalyses L-glutamine + H2O = L-glutamate + NH4(+). This Bacillus mycoides (strain KBAB4) (Bacillus weihenstephanensis) protein is Glutaminase.